The sequence spans 443 residues: MTHIQLDYGKTLEFFDKHELDQQKDIVKTIHQTIHKGTGAGNDFLGWLDLPVDYDKEEFSRIVEASKRIKSNSDVLVVIGIGGSYLGARAAIEMLTSSFRTNTEYPEIVFVGNHLSSSYTKELLDYLQGKDFSVNVISKSGTTTEPAVAFRLFKQLVEEKYGKDEAKKRIFATTDKSKGALKQLADNEGYETFVVPDDVGGRYSVLTAVGLLPIATAGINIESIMIGAAKAREELSSDDLDQNIAYQYATIRNILYSKGYTTEMLINYEPSMQYFNEWWKQLYGESEGKDFKGIYPSSANYTTDLHSLGQYVQEGRRFLFETVVKVNHPKHDIKIEEDADDLDGLNYLAGKSIDEVNTKAFEGTLLAHTDGGVPNIVVNIPQLDEETFGYVVYFFELACAMSGYQLGVNPFNQPGVEAYKQNMFALLGKPGFEDKKKELENRL.

Residue Glu-285 is the Proton donor of the active site. Residues His-306 and Lys-420 contribute to the active site.

Belongs to the GPI family.

It localises to the cytoplasm. It catalyses the reaction alpha-D-glucose 6-phosphate = beta-D-fructose 6-phosphate. Its pathway is carbohydrate biosynthesis; gluconeogenesis. It participates in carbohydrate degradation; glycolysis; D-glyceraldehyde 3-phosphate and glycerone phosphate from D-glucose: step 2/4. Functionally, catalyzes the reversible isomerization of glucose-6-phosphate to fructose-6-phosphate. This Staphylococcus epidermidis (strain ATCC 12228 / FDA PCI 1200) protein is Glucose-6-phosphate isomerase.